We begin with the raw amino-acid sequence, 256 residues long: Tryptophan synthase alpha chain (256 aa).

Active-site proton acceptor residues include Glu48 and Asp59.

The protein belongs to the TrpA family. As to quaternary structure, tetramer of two alpha and two beta chains.

It carries out the reaction (1S,2R)-1-C-(indol-3-yl)glycerol 3-phosphate + L-serine = D-glyceraldehyde 3-phosphate + L-tryptophan + H2O. It functions in the pathway amino-acid biosynthesis; L-tryptophan biosynthesis; L-tryptophan from chorismate: step 5/5. In terms of biological role, the alpha subunit is responsible for the aldol cleavage of indoleglycerol phosphate to indole and glyceraldehyde 3-phosphate. The chain is Tryptophan synthase alpha chain from Caldicellulosiruptor bescii (strain ATCC BAA-1888 / DSM 6725 / KCTC 15123 / Z-1320) (Anaerocellum thermophilum).